The following is a 374-amino-acid chain: Pyruvate dehydrogenase E1 component subunit beta-1, mitochondrial (374 aa).

Residues 1-34 constitute a mitochondrion transit peptide; it reads MLGIARRRLGSGCALGQLMQALRPAAAAAAARTY. Residue Glu97 participates in thiamine diphosphate binding. The K(+) site is built by Ile150, Ala198, Ile199, and Asp201.

As to quaternary structure, tetramer of 2 alpha and 2 beta subunits. Thiamine diphosphate serves as cofactor.

It localises to the mitochondrion matrix. The enzyme catalyses N(6)-[(R)-lipoyl]-L-lysyl-[protein] + pyruvate + H(+) = N(6)-[(R)-S(8)-acetyldihydrolipoyl]-L-lysyl-[protein] + CO2. The pyruvate dehydrogenase complex catalyzes the overall conversion of pyruvate to acetyl-CoA and CO(2). It contains multiple copies of three enzymatic components: pyruvate dehydrogenase (E1), dihydrolipoamide acetyltransferase (E2) and lipoamide dehydrogenase (E3). In Oryza sativa subsp. japonica (Rice), this protein is Pyruvate dehydrogenase E1 component subunit beta-1, mitochondrial.